The chain runs to 179 residues: tRNA-splicing endonuclease (179 aa).

Catalysis depends on residues Tyr-115, His-123, and Lys-154.

Belongs to the tRNA-intron endonuclease family. Archaeal short subfamily. As to quaternary structure, homotetramer; although the tetramer contains four active sites, only two participate in the cleavage. Therefore, it should be considered as a dimer of dimers.

It catalyses the reaction pretRNA = a 3'-half-tRNA molecule with a 5'-OH end + a 5'-half-tRNA molecule with a 2',3'-cyclic phosphate end + an intron with a 2',3'-cyclic phosphate and a 5'-hydroxyl terminus.. In terms of biological role, endonuclease that removes tRNA introns. Cleaves pre-tRNA at the 5'- and 3'-splice sites to release the intron. The products are an intron and two tRNA half-molecules bearing 2',3' cyclic phosphate and 5'-OH termini. Recognizes a pseudosymmetric substrate in which 2 bulged loops of 3 bases are separated by a stem of 4 bp. The polypeptide is tRNA-splicing endonuclease (Methanopyrus kandleri (strain AV19 / DSM 6324 / JCM 9639 / NBRC 100938)).